The following is a 591-amino-acid chain: CTP synthase 1 (591 aa).

Positions 300 to 554 (SIALVGKYTK…LAAAGRLQSY (255 aa)) constitute a Glutamine amidotransferase type-1 domain. Residues C399, H526, and E528 each act as for GATase activity in the active site. S571 and S575 each carry phosphoserine.

The protein belongs to the CTP synthase family.

It carries out the reaction UTP + L-glutamine + ATP + H2O = CTP + L-glutamate + ADP + phosphate + 2 H(+). It participates in pyrimidine metabolism; CTP biosynthesis via de novo pathway; CTP from UDP: step 2/2. In terms of biological role, this enzyme is involved in the de novo synthesis of CTP, a precursor of DNA, RNA and phospholipids. Catalyzes the ATP-dependent amination of UTP to CTP with either L-glutamine or ammonia as a source of nitrogen. This is CTP synthase 1 (ctps1) from Danio rerio (Zebrafish).